The chain runs to 112 residues: Ferredoxin-2 (112 aa).

4Fe-4S ferredoxin-type domains follow at residues 2-30 (TYVVTDNCIACKYTDCVEVCPVDCFYEGE) and 31-60 (NTLVIHPDECIDCGVCEPECPADAIRPDTE). [3Fe-4S] cluster-binding residues include Cys9 and Cys17. Residues Cys21, Cys40, Cys43, and Cys46 each contribute to the [4Fe-4S] cluster site. [3Fe-4S] cluster is bound at residue Cys50. A compositionally biased stretch (basic and acidic residues) spans 85-103 (DPMPDHKKYDGETGKREKY). The segment at 85 to 112 (DPMPDHKKYDGETGKREKYFSPNPGTGD) is disordered.

[4Fe-4S] cluster serves as cofactor. Requires [3Fe-4S] cluster as cofactor.

In terms of biological role, ferredoxins are iron-sulfur proteins that transfer electrons in a wide variety of metabolic reactions. This Rhodobacter capsulatus (strain ATCC BAA-309 / NBRC 16581 / SB1003) protein is Ferredoxin-2 (fdxA).